The following is a 103-amino-acid chain: Co-chaperonin GroES (103 aa).

This sequence belongs to the GroES chaperonin family. Heptamer of 7 subunits arranged in a ring. Interacts with the chaperonin GroEL.

The protein resides in the cytoplasm. Its function is as follows. Together with the chaperonin GroEL, plays an essential role in assisting protein folding. The GroEL-GroES system forms a nano-cage that allows encapsulation of the non-native substrate proteins and provides a physical environment optimized to promote and accelerate protein folding. GroES binds to the apical surface of the GroEL ring, thereby capping the opening of the GroEL channel. This chain is Co-chaperonin GroES, found in Prochlorococcus marinus (strain MIT 9313).